A 155-amino-acid chain; its full sequence is Transcriptional repressor NrdR (155 aa).

A zinc finger spans residues 3 to 34 (CPYCGHLEDRVVDSRETQDGQATRRRRACLSC). The ATP-cone domain occupies 49 to 139 (PQVVKKDGRR…VYRAFRDVGE (91 aa)).

It belongs to the NrdR family. It depends on Zn(2+) as a cofactor.

Negatively regulates transcription of bacterial ribonucleotide reductase nrd genes and operons by binding to NrdR-boxes. The protein is Transcriptional repressor NrdR of Anaeromyxobacter dehalogenans (strain 2CP-1 / ATCC BAA-258).